The chain runs to 124 residues: Protein archease (124 aa).

4 residues coordinate Ca(2+): histidine 7, aspartate 10, aspartate 123, and threonine 124.

The protein belongs to the archease family.

Activates the tRNA-splicing ligase complex by facilitating the enzymatic turnover of catalytic subunit RtcB. Acts by promoting the guanylylation of RtcB, a key intermediate step in tRNA ligation. Can also alter the NTP specificity of RtcB such that ATP, dGTP or ITP is used efficiently. May also act as a chaperone or modulator of proteins involved in DNA or RNA processing. The polypeptide is Protein archease (Thermotoga maritima (strain ATCC 43589 / DSM 3109 / JCM 10099 / NBRC 100826 / MSB8)).